The following is a 628-amino-acid chain: FAD-linked oxidoreductase easE (628 aa).

Positions 1–20 (MSHRILCVAFCVCSLVAVSS) are cleaved as a signal peptide. The region spanning 144–328 (HQGRIPLYSA…TRATMRVHLN (185 aa)) is the FAD-binding PCMH-type domain. Pros-8alpha-FAD histidine is present on histidine 182. 3 N-linked (GlcNAc...) asparagine glycosylation sites follow: asparagine 343, asparagine 382, and asparagine 487.

The protein belongs to the oxygen-dependent FAD-linked oxidoreductase family. The cofactor is FAD.

It participates in alkaloid biosynthesis; ergot alkaloid biosynthesis. FAD binding oxidoreductase; part of the gene cluster that mediates the biosynthesis of fumiclavanine C, a fungal ergot alkaloid. DmaW catalyzes the first step of ergot alkaloid biosynthesis by condensing dimethylallyl diphosphate (DMAP) and tryptophan to form 4-dimethylallyl-L-tryptophan. The second step is catalyzed by the methyltransferase easF that methylates 4-dimethylallyl-L-tryptophan in the presence of S-adenosyl-L-methionine, resulting in the formation of 4-dimethylallyl-L-abrine. The catalase easC and the FAD-dependent oxidoreductase easE then transform 4-dimethylallyl-L-abrine to chanoclavine-I which is further oxidized by EasD in the presence of NAD(+), resulting in the formation of chanoclavine-I aldehyde. EasA reduces chanoclavine-I aldehyde to dihydrochanoclavine-I aldehyde that spontaneously dehydrates to form 6,8-dimethyl-6,7-didehydroergoline. EasG then catalyzes the reduction of 6,8-dimethyl-6,7-didehydroergoline to form festuclavine. Hydrolysis of festuclavine by easM then leads to the formation of fumigaclavine B which is in turn acetylated by easN to fumigaclavine A. Finally, easL catalyzes the conversion of fumigaclavine A into fumigaclavine C by attaching a dimethylallyl moiety to C-2 of the indole nucleus. The chain is FAD-linked oxidoreductase easE from Aspergillus fumigatus (strain ATCC MYA-4609 / CBS 101355 / FGSC A1100 / Af293) (Neosartorya fumigata).